The primary structure comprises 322 residues: Ferrochelatase (322 aa).

The Fe cation site is built by His-193 and Glu-274.

This sequence belongs to the ferrochelatase family.

It is found in the cytoplasm. It carries out the reaction heme b + 2 H(+) = protoporphyrin IX + Fe(2+). It participates in porphyrin-containing compound metabolism; protoheme biosynthesis; protoheme from protoporphyrin-IX: step 1/1. Catalyzes the ferrous insertion into protoporphyrin IX. The polypeptide is Ferrochelatase (Photobacterium profundum (strain SS9)).